We begin with the raw amino-acid sequence, 101 residues long: MMLEHVLVLSAYLFSIGIYGLITSRNMVRALMCLELILNAVNINFVTFSDFFDSRQLKGDIFSIFVIAIAAAEAAIGSAIVSSIYRNRKSTRINQSTLLNK.

The next 3 helical transmembrane spans lie at 2-22 (MLEH…YGLI), 32-52 (MCLE…SDFF), and 61-81 (IFSI…SAIV).

This sequence belongs to the complex I subunit 4L family. In terms of assembly, NDH is composed of at least 16 different subunits, 5 of which are encoded in the nucleus.

Its subcellular location is the plastid. The protein localises to the chloroplast thylakoid membrane. The enzyme catalyses a plastoquinone + NADH + (n+1) H(+)(in) = a plastoquinol + NAD(+) + n H(+)(out). The catalysed reaction is a plastoquinone + NADPH + (n+1) H(+)(in) = a plastoquinol + NADP(+) + n H(+)(out). In terms of biological role, NDH shuttles electrons from NAD(P)H:plastoquinone, via FMN and iron-sulfur (Fe-S) centers, to quinones in the photosynthetic chain and possibly in a chloroplast respiratory chain. The immediate electron acceptor for the enzyme in this species is believed to be plastoquinone. Couples the redox reaction to proton translocation, and thus conserves the redox energy in a proton gradient. The protein is NAD(P)H-quinone oxidoreductase subunit 4L, chloroplastic of Citrus sinensis (Sweet orange).